An 827-amino-acid chain; its full sequence is Spastin (827 aa).

Polar residues predominate over residues methionine 1 to lysine 13. The interval methionine 1–alanine 58 is disordered. Residues methionine 1–proline 79 are Cytoplasmic-facing. Positions threonine 38–serine 50 are enriched in low complexity. The segment at residues valine 80–tyrosine 100 is an intramembrane region (helical). Residues valine 101–leucine 827 are Cytoplasmic-facing. Disordered regions lie at residues glutamine 127–leucine 190 and serine 207–histidine 229. Positions glycine 129 to histidine 141 are enriched in basic residues. Positions serine 142–leucine 190 are enriched in low complexity. One can recognise an MIT domain in the interval histidine 231 to leucine 306. 3 disordered regions span residues histidine 358–serine 381, valine 398–glycine 433, and valine 476–serine 526. Low complexity predominate over residues threonine 364–serine 381. 2 stretches are compositionally biased toward low complexity: residues valine 476–valine 486 and glutamine 510–glutamine 524. Residue glycine 592–threonine 599 coordinates ATP.

This sequence belongs to the AAA ATPase family. Spastin subfamily. As to quaternary structure, homohexamer. The homohexamer is stabilized by ATP-binding. The homohexamer may adopt a ring conformation through which microtubules pass prior to being severed. Interacts with microtubules.

The protein localises to the membrane. It localises to the cytoplasm. Its subcellular location is the cytoskeleton. It is found in the microtubule organizing center. The protein resides in the centrosome. It carries out the reaction n ATP + n H2O + a microtubule = n ADP + n phosphate + (n+1) alpha/beta tubulin heterodimers.. Functionally, ATP-dependent microtubule severing protein. Microtubule severing may promote reorganization of cellular microtubule arrays and the release of microtubules from the microtubule organizing center following nucleation. This Anopheles gambiae (African malaria mosquito) protein is Spastin (spas).